The following is a 553-amino-acid chain: Methyl-coenzyme M reductase II subunit alpha (553 aa).

Gln150 contributes to the coenzyme F430 binding site. Coenzyme B contacts are provided by residues Arg228, 259-260 (KH), and Arg273. Residue His260 is modified to Pros-methylhistidine. At Arg274 the chain carries 5-methylarginine. Tyr335 contributes to the coenzyme M binding site. Gln402 is subject to 2-methylglutamine. Tyr446 provides a ligand contact to coenzyme M. Gly447 carries the post-translational modification 1-thioglycine. Asp452 carries the (Z)-2,3-didehydroaspartate modification. At Cys454 the chain carries S-methylcysteine.

This sequence belongs to the methyl-coenzyme M reductase alpha subunit family. In terms of assembly, MCR is a hexamer of two alpha, two beta, and two gamma chains, forming a dimer of heterotrimers. It depends on coenzyme F430 as a cofactor. The alpha subunit contains six modified amino acids near the active site region. Is methylated on His-260, Arg-274, Gln-402 and Cys-454, probably by the action of specific S-adenosylmethionine-dependent methyltransferases. Also contains a thioglycine at position 447, forming a thiopeptide bond. Contains a didehydroaspartate residue at position 452. The methylation on C5 of Arg-274 is a post-translational methylation not essential in vivo, but which plays a role for the stability and structural integrity of MCR.

It carries out the reaction coenzyme B + methyl-coenzyme M = methane + coenzyme M-coenzyme B heterodisulfide. It participates in one-carbon metabolism; methyl-coenzyme M reduction; methane from methyl-coenzyme M: step 1/1. In terms of biological role, component of the methyl-coenzyme M reductase (MCR) I that catalyzes the reductive cleavage of methyl-coenzyme M (CoM-S-CH3 or 2-(methylthio)ethanesulfonate) using coenzyme B (CoB or 7-mercaptoheptanoylthreonine phosphate) as reductant which results in the production of methane and the mixed heterodisulfide of CoB and CoM (CoM-S-S-CoB). This is the final step in methanogenesis. The protein is Methyl-coenzyme M reductase II subunit alpha (mrtA) of Methanothermobacter thermautotrophicus (strain ATCC 29096 / DSM 1053 / JCM 10044 / NBRC 100330 / Delta H) (Methanobacterium thermoautotrophicum).